The sequence spans 84 residues: Double gene block protein 2 (84 aa).

At 1–4 the chain is on the lumenal side; the sequence is MPSA. The chain crosses the membrane as a helical span at residues 5–25; it reads NLHPIVLTGVIGLMLLIRLRC. Over 26 to 30 the chain is Cytoplasmic; the sequence is TFTST. A helical membrane pass occupies residues 31 to 51; that stretch reads FSLPPLVTLNQIIALSFCGLL. The Lumenal segment spans residues 52–84; the sequence is LNSISRAERACYYNYSVDSSKQQHISISTPNGK.

The protein belongs to the carmovirus double gene block protein 2 family.

The protein resides in the host endoplasmic reticulum membrane. In terms of biological role, cell-to-cell movement function. The chain is Double gene block protein 2 from Carnation mottle virus (isolate China/Shanghai) (CarMV).